A 342-amino-acid polypeptide reads, in one-letter code: S-adenosyl-L-methionine-dependent tRNA 4-demethylwyosine synthase (342 aa).

Positions 45, 58, 71, 81, 85, and 88 each coordinate [4Fe-4S] cluster. Residues 64-312 (YGIHSHRCLQ…VKHLPGYHIE (249 aa)) enclose the Radical SAM core domain.

This sequence belongs to the TYW1 family. As to quaternary structure, monomer. Requires [4Fe-4S] cluster as cofactor.

The protein resides in the cytoplasm. The catalysed reaction is N(1)-methylguanosine(37) in tRNA(Phe) + pyruvate + S-adenosyl-L-methionine = 4-demethylwyosine(37) in tRNA(Phe) + 5'-deoxyadenosine + L-methionine + CO2 + H2O. In terms of biological role, component of the wyosine derivatives biosynthesis pathway that catalyzes the condensation of N-methylguanine with 2 carbon atoms from pyruvate to form the tricyclic 4-demethylwyosine (imG-14) on guanosine-37 of tRNA(Phe). The chain is S-adenosyl-L-methionine-dependent tRNA 4-demethylwyosine synthase from Pyrococcus abyssi (strain GE5 / Orsay).